The primary structure comprises 256 residues: tRNA (guanine-N(7)-)-methyltransferase (256 aa).

Polar residues predominate over residues 1-11 (MHPQDASTEQT). Residues 1-35 (MHPQDASTEQTPVDDDQVESSQPVHAPEDVAHPRR) are disordered. The S-adenosyl-L-methionine site is built by E85, E110, D137, and D160. D160 is an active-site residue. K164 serves as a coordination point for substrate. The interval 166 to 171 (RHNKRR) is interaction with RNA. Substrate is bound by residues D196 and 234–237 (TKFE).

It belongs to the class I-like SAM-binding methyltransferase superfamily. TrmB family.

It catalyses the reaction guanosine(46) in tRNA + S-adenosyl-L-methionine = N(7)-methylguanosine(46) in tRNA + S-adenosyl-L-homocysteine. It participates in tRNA modification; N(7)-methylguanine-tRNA biosynthesis. Catalyzes the formation of N(7)-methylguanine at position 46 (m7G46) in tRNA. The sequence is that of tRNA (guanine-N(7)-)-methyltransferase from Cupriavidus pinatubonensis (strain JMP 134 / LMG 1197) (Cupriavidus necator (strain JMP 134)).